The chain runs to 567 residues: Glucose-6-phosphate isomerase, cytosolic B (567 aa).

D-glucose 6-phosphate contacts are provided by residues 156-157 (GS), 212-217 (SKTFTT), Gln356, Glu360, His391, and Lys516. The active-site Proton donor is the Glu360. Active-site residues include His391 and Lys516.

It belongs to the GPI family. As to quaternary structure, homodimer.

It localises to the cytoplasm. It carries out the reaction alpha-D-glucose 6-phosphate = beta-D-fructose 6-phosphate. It functions in the pathway carbohydrate degradation; glycolysis; D-glyceraldehyde 3-phosphate and glycerone phosphate from D-glucose: step 2/4. Catalyzes the conversion of glucose-6-phosphate to fructose-6-phosphate, the second step in glycolysis, and the reverse reaction during gluconeogenesis. The polypeptide is Glucose-6-phosphate isomerase, cytosolic B (Oryza sativa subsp. japonica (Rice)).